A 453-amino-acid polypeptide reads, in one-letter code: MPDYDTQTLRDWDRRHIWHPFTQMKEWEESEPVVIVEGEGSWIIDSEGKRYLDGVAAIWTNVHGHCRREINEALKAQVDRLEHSTLLGLTNDRAVVLAKRLAEIAPPGLCKVFYSDNGSTAVEVGVKMAFQFWRHEGKPEKSRFISFTSAYHGDTLGAVSVGGIDLFHGVFRPLLFPTIQAPAPYCYRCPMGRDTPAACGMECLTELERIMESHAGEVAGLVIEPLVQGAGGMIVQPEGFLKGVRELCDRHDILMIADEVAVGFGRTGAMFACGREGITPDIMALSKGITAGYMPLAATLATQQVYDAFLGEYREMKTFFHGHTFTGNPLGCAVALASLDLFESDRLLGKLPNKIKLLQEKLKGLIELEHVGDVRQCGMIAAVELVRDRATKEPFDWEERVGVRVCLEARTHGVFLRPLGNVIVIFPPLAITAEEIDFLVDGLEKSIHTVTGG.

Gly-118–Ser-119 is a binding site for pyridoxal 5'-phosphate. Substrate is bound at residue Tyr-151. A pyridoxal 5'-phosphate-binding site is contributed by Asp-258. Residues Lys-287, Gly-322, and Arg-417 each contribute to the substrate site. At Lys-287 the chain carries N6-(pyridoxal phosphate)lysine.

This sequence belongs to the class-III pyridoxal-phosphate-dependent aminotransferase family. BioA subfamily. Homodimer. Requires pyridoxal 5'-phosphate as cofactor.

Its subcellular location is the cytoplasm. The catalysed reaction is (8S)-8-amino-7-oxononanoate + S-adenosyl-L-methionine = S-adenosyl-4-methylsulfanyl-2-oxobutanoate + (7R,8S)-7,8-diammoniononanoate. The protein operates within cofactor biosynthesis; biotin biosynthesis; 7,8-diaminononanoate from 8-amino-7-oxononanoate (SAM route): step 1/1. Catalyzes the transfer of the alpha-amino group from S-adenosyl-L-methionine (SAM) to 7-keto-8-aminopelargonic acid (KAPA) to form 7,8-diaminopelargonic acid (DAPA). It is the only aminotransferase known to utilize SAM as an amino donor. This Geobacter sulfurreducens (strain ATCC 51573 / DSM 12127 / PCA) protein is Adenosylmethionine-8-amino-7-oxononanoate aminotransferase.